A 1068-amino-acid polypeptide reads, in one-letter code: Sucrose-phosphate synthase (1068 aa).

Disordered regions lie at residues 18 to 47 and 118 to 139; these read HTSSRGAGGGGGGGDPRSPTKAASPRGAHM and KEQEQVRREATEDLAEDLSEGE. Residues 23-32 are compositionally biased toward gly residues; that stretch reads GAGGGGGGGD. The span at 118 to 128 shows a compositional bias: basic and acidic residues; it reads KEQEQVRREAT.

The protein belongs to the glycosyltransferase 1 family. Homodimer or homotetramer.

The catalysed reaction is beta-D-fructose 6-phosphate + UDP-alpha-D-glucose = sucrose 6(F)-phosphate + UDP + H(+). The protein operates within glycan biosynthesis; sucrose biosynthesis; sucrose from D-fructose 6-phosphate and UDP-alpha-D-glucose: step 1/2. Its activity is regulated as follows. Activity is regulated by phosphorylation and moderated by concentration of metabolites and light. In terms of biological role, plays a role in photosynthetic sucrose synthesis by catalyzing the rate-limiting step of sucrose biosynthesis from UDP-glucose and fructose- 6-phosphate. Involved in the regulation of carbon partitioning in the leaves of plants. May regulate the synthesis of sucrose and therefore play a major role as a limiting factor in the export of photoassimilates out of the leaf. Plays a role for sucrose availability that is essential for plant growth and fiber elongation. This is Sucrose-phosphate synthase from Zea mays (Maize).